A 923-amino-acid chain; its full sequence is Protocadherin gamma-B4 (923 aa).

Residues 1 to 30 (MGSGAGELGRAERLPVLFLFLLSLFCPALC) form the signal peptide. Cadherin domains are found at residues 31-133 (EQIR…TPKF), 134-242 (TQNS…APVF), 243-345 (SQDV…APEV), 346-450 (IFQS…APVF), 451-560 (SQSS…APRV), and 568-673 (DGSA…LPDI). Residues 31–689 (EQIRYRIPEE…SDLQAELQFY (659 aa)) are Extracellular-facing. 2 N-linked (GlcNAc...) asparagine glycosylation sites follow: N417 and N543. The helical transmembrane segment at 690–710 (LVVALALISVLFLVAMILAIA) threads the bilayer. At 711 to 923 (LRLRRSSSPA…KKKSGKKEKK (213 aa)) the chain is on the cytoplasmic side. 2 disordered regions span residues 797 to 832 (SHQQ…WPNN) and 893 to 923 (ATLT…KEKK). Residues 913 to 923 (NKKKSGKKEKK) are compositionally biased toward basic residues.

It localises to the cell membrane. Potential calcium-dependent cell-adhesion protein. May be involved in the establishment and maintenance of specific neuronal connections in the brain. The sequence is that of Protocadherin gamma-B4 (PCDHGB4) from Homo sapiens (Human).